A 963-amino-acid chain; its full sequence is Phosphoenolpyruvate carboxylase (963 aa).

The residue at position 11 (Ser-11) is a Phosphoserine. Active-site residues include His-172 and Lys-600.

Belongs to the PEPCase type 1 family. In terms of assembly, homotetramer. The cofactor is Mg(2+).

It localises to the cytoplasm. It catalyses the reaction oxaloacetate + phosphate = phosphoenolpyruvate + hydrogencarbonate. With respect to regulation, by light-reversible phosphorylation. Its function is as follows. Through the carboxylation of phosphoenolpyruvate (PEP) it forms oxaloacetate, a four-carbon dicarboxylic acid source for the tricarboxylic acid cycle. The polypeptide is Phosphoenolpyruvate carboxylase (PPC) (Picea abies (Norway spruce)).